The sequence spans 702 residues: Kinesin-like protein KIF3A (702 aa).

Positions 14–345 constitute a Kinesin motor domain; it reads NVKVVVRCRP…LRYANRAKNI (332 aa). ATP is bound at residue 100-107; sequence GQTGTGKT. Residues 355–593 adopt a coiled-coil conformation; that stretch reads PKDALLRQFQ…LSRELRLQML (239 aa). Disordered regions lie at residues 372 to 424 and 667 to 702; these read KKLE…KMIE and LMKL…SLLQ. The segment covering 376–400 has biased composition (acidic residues); that stretch reads EGEEISGSDISGSEEDDDEEGEVGE. The segment covering 410–424 has biased composition (basic and acidic residues); it reads DQAGKKKVSPDKMIE. The interval 600 to 702 is globular; it reads PRDYQEMIEN…PETVIDSLLQ (103 aa). Over residues 675-690 the composition is skewed to basic residues; the sequence is TSKGKARPKTGRRKRS. Ser690 carries the phosphoserine modification.

The protein belongs to the TRAFAC class myosin-kinesin ATPase superfamily. Kinesin family. Kinesin II subfamily. As to quaternary structure, heterodimer of KIF3A and KIF3B. Interacts with CIMAP3. Interacts with CLN3. Interacts with DCTN1. Interacts with FLCN. Interacts with AP3B1.

The protein resides in the cytoplasm. It localises to the cytoskeleton. Its subcellular location is the cell projection. It is found in the cilium. The protein localises to the microtubule organizing center. The protein resides in the centrosome. It localises to the centriole. Functionally, microtubule-based anterograde translocator for membranous organelles. Plus end-directed microtubule sliding activity in vitro. Plays a role in primary cilia formation. Plays a role in centriole cohesion and subdistal appendage organization and function. Regulates the formation of the subdistal appendage via recruitment of DCTN1 to the centriole. Also required for ciliary basal feet formation and microtubule anchoring to mother centriole. The chain is Kinesin-like protein KIF3A (KIF3A) from Macaca fascicularis (Crab-eating macaque).